The following is a 358-amino-acid chain: WAT1-related protein At3g28080 (358 aa).

The next 10 helical transmembrane spans lie at 12 to 32 (AVFL…STLF), 42 to 62 (IYPF…PSLF), 81 to 101 (IGLL…GIEY), 105 to 125 (TLAS…AVIF), 137 to 157 (SVAK…VIFY), 187 to 207 (WLIG…SFIL), 219 to 239 (FTVS…IGLV), 245 to 265 (PSIW…TGII), 283 to 303 (LYLA…GTIF), and 308 to 328 (LYLG…VVMW). Positions 27-155 (GLSTLFKVAT…LSLIGAFVVI (129 aa)) constitute an EamA domain.

This sequence belongs to the drug/metabolite transporter (DMT) superfamily. Plant drug/metabolite exporter (P-DME) (TC 2.A.7.4) family.

The protein resides in the membrane. The polypeptide is WAT1-related protein At3g28080 (Arabidopsis thaliana (Mouse-ear cress)).